The chain runs to 580 residues: Glypican-3 (580 aa).

Residues 1–24 (MAGTVRTACLVVAMLLSLDFPGQA) form the signal peptide. Q25 is modified (pyrrolidone carboxylic acid). Intrachain disulfides connect C35–C72, C65–C262, C73–C265, C197–C349, C252–C285, C274–C422, and C278–C410. N124 and N241 each carry an N-linked (GlcNAc...) asparagine glycan. A Phosphoserine modification is found at S352. Residue N418 is glycosylated (N-linked (GlcNAc...) asparagine). O-linked (Xyl...) (glycosaminoglycan) serine glycans are attached at residues S495 and S509. N554 is lipidated: GPI-anchor amidated asparagine. Positions 555 to 580 (LGNVHSPLKLLTSMAISVVCFFFLVH) are cleaved as a propeptide — removed in mature form.

The protein belongs to the glypican family. In terms of assembly, heterodimer; disulfide-linked. Cleavage by a furin-like convertase results in production of alpha and beta chains which form a disulfide-linked heterodimer. Interacts with DPP4. Interacts with FGF2. Interacts with WNT5A. Also interacts with WNT3A and WNT7B. Interacts with hedgehog protein SHH; the heparan sulfate chains are not required for the interaction. Also interacts with hedgehog protein IHH. Interacts with CD81. Interacts with Wnt receptors FZD4, FZD7 and FZD8; the heparan sulfate chains are required for the interaction. In terms of processing, O-glycosylated; contains heparan sulfate and/or chondroitin sulfate. Cleaved intracellularly by a furin-like convertase to generate 2 subunits, alpha and beta, which remain associated through disulfide bonds and are associated with the cell surface via the GPI-anchor. This processing is essential for its role in inhibition of hedgehog signaling. A second proteolytic event may result in cleavage of the protein on the cell surface, separating it from the GPI-anchor and leading to its shedding from the cell surface.

Its subcellular location is the cell membrane. Functionally, cell surface proteoglycan. Negatively regulates the hedgehog signaling pathway when attached via the GPI-anchor to the cell surface by competing with the hedgehog receptor PTC1 for binding to hedgehog proteins. Binding to the hedgehog protein SHH triggers internalization of the complex by endocytosis and its subsequent lysosomal degradation. Positively regulates the canonical Wnt signaling pathway by binding to the Wnt receptor Frizzled and stimulating the binding of the Frizzled receptor to Wnt ligands. Positively regulates the non-canonical Wnt signaling pathway. Binds to CD81 which decreases the availability of free CD81 for binding to the transcriptional repressor HHEX, resulting in nuclear translocation of HHEX and transcriptional repression. Inhibits the dipeptidyl peptidase activity of DPP4. Plays a role in limb patterning and skeletal development by controlling the cellular response to BMP4. Modulates the effects of growth factors BMP2, BMP7 and FGF7 on renal branching morphogenesis. Required for coronary vascular development. Plays a role in regulating cell movements during gastrulation. The chain is Glypican-3 (GPC3) from Pan troglodytes (Chimpanzee).